The chain runs to 147 residues: MRLHDLKPAEGSTKKKKRVGRGIGSGHGKTSGRGHKGQNARSGGGVRPGFEGGQMPLTRRIPKRGFTNIFKKEYAIVNVGTLEERFEDGAEITPEVLIEKGIIKDVKDGVKILGDGELTKKLTVKAHKFSQSAVEKIQAVGGKAEVI.

The interval 1–58 (MRLHDLKPAEGSTKKKKRVGRGIGSGHGKTSGRGHKGQNARSGGGVRPGFEGGQMPLT) is disordered. Residues 42–52 (SGGGVRPGFEG) show a composition bias toward gly residues.

The protein belongs to the universal ribosomal protein uL15 family. Part of the 50S ribosomal subunit.

Its function is as follows. Binds to the 23S rRNA. The polypeptide is Large ribosomal subunit protein uL15 (Caldanaerobacter subterraneus subsp. tengcongensis (strain DSM 15242 / JCM 11007 / NBRC 100824 / MB4) (Thermoanaerobacter tengcongensis)).